We begin with the raw amino-acid sequence, 196 residues long: MSSYIPYVVEKTSRGERSYDIYSRLLKDRIIMLSGEINDDLAASIVAQLLFLEAEDPQKDIYLYINSPGGVVTSGFSIYDTMNYIKADVSTICIGQAASMGAFLLSCGAPGKRFALPNSRIMIHQPLGGARGQATDIEIQAKEILRLKAILNDILAKNTKQKLSKIEKDTDRDFFMSAIEAKEYGLIDKVLEKSFK.

The active-site Nucleophile is the serine 99. The active site involves histidine 124.

Belongs to the peptidase S14 family. As to quaternary structure, fourteen ClpP subunits assemble into 2 heptameric rings which stack back to back to give a disk-like structure with a central cavity, resembling the structure of eukaryotic proteasomes.

It localises to the cytoplasm. It catalyses the reaction Hydrolysis of proteins to small peptides in the presence of ATP and magnesium. alpha-casein is the usual test substrate. In the absence of ATP, only oligopeptides shorter than five residues are hydrolyzed (such as succinyl-Leu-Tyr-|-NHMec, and Leu-Tyr-Leu-|-Tyr-Trp, in which cleavage of the -Tyr-|-Leu- and -Tyr-|-Trp bonds also occurs).. Cleaves peptides in various proteins in a process that requires ATP hydrolysis. Has a chymotrypsin-like activity. Plays a major role in the degradation of misfolded proteins. This Campylobacter lari (strain RM2100 / D67 / ATCC BAA-1060) protein is ATP-dependent Clp protease proteolytic subunit.